The primary structure comprises 421 residues: Zinc finger protein 57 (421 aa).

Residues 15–88 form the KRAB domain; sequence VSYEDVAVSF…SCTGVFKGGP (74 aa). The segment at 90 to 113 adopts a C2H2-type 1; degenerate zinc-finger fold; it reads FFCLTCGKCFKKNTFLFNHQFPVR. 2 consecutive C2H2-type zinc fingers follow at residues 140-162 and 168-190; these read FFCN…RRAH and RSCP…LKVH. Residues 191–221 form a disordered region; that stretch reads QNKPAASNQAGNQASNQRLKSRVPPTTPRSQ. Residues 195 to 207 are compositionally biased toward low complexity; the sequence is AASNQAGNQASNQ. Residues 264–286 form a C2H2-type 4 zinc finger; the sequence is ISCPYCHITFTMRTCLLTHLKIH. The segment at 313–332 adopts a C2H2-type 5; degenerate zinc-finger fold; sequence YTCPVCDSSFRGKESLLDHL. The tract at residues 371–421 is disordered; that stretch reads GKRMESRRRRRKRACTENPETEGLSGKGRVAPWEMEGATSPESPVTEEDSD.

This sequence belongs to the krueppel C2H2-type zinc-finger protein family. Expressed in oocytes and in a subset of adult tissues. Expressed at high levels in testis, and at low levels in cerebellum. Present in sciatic nerve and spinal cord (at protein level).

Its subcellular location is the nucleus. Its function is as follows. Transcription regulator required to maintain maternal and paternal gene imprinting, a process by which gene expression is restricted in a parent of origin-specific manner by epigenetic modification of genomic DNA and chromatin, including DNA methylation. Acts by controlling DNA methylation during the earliest multicellular stages of development at multiple imprinting control regions (ICRs). Acts together with ZNF445, but ZFP57 plays the predominant role in imprinting maintenance. In contrast, in humans, ZNF445 seems to be the major factor early embryonic imprinting maintenance. Required for the establishment of maternal methylation imprints at SNRPN locus. Acts as a transcriptional repressor in Schwann cells. Binds to a 5'-TGCCGC-3' consensus sequence and recognizes the methylated CpG within this element. The protein is Zinc finger protein 57 (Zfp57) of Mus musculus (Mouse).